A 233-amino-acid chain; its full sequence is Small ribosomal subunit protein uS2 (233 aa).

Belongs to the universal ribosomal protein uS2 family.

The sequence is that of Small ribosomal subunit protein uS2 from Clostridium novyi (strain NT).